The chain runs to 963 residues: Protocadherin alpha-C1 (963 aa).

Positions 1-18 (MVGCGVAVLCLWVSCGAA) are cleaved as a signal peptide. 5 consecutive Cadherin domains span residues 19–124 (AGQL…SPLF), 125–233 (PAGD…APVF), 234–340 (ERSV…APEL), 349–445 (VPED…TPNF), and 446–555 (PQPQ…YPVI). Topologically, residues 19–683 (AGQLEYSVPE…GGQLSAQNLY (665 aa)) are extracellular. A glycan (N-linked (GlcNAc...) asparagine) is linked at Asn-38. 2 N-linked (GlcNAc...) asparagine glycosylation sites follow: Asn-248 and Asn-274. N-linked (GlcNAc...) asparagine glycosylation is present at Asn-562. The Cadherin 6 domain occupies 570–667 (VPRSARTGHL…NSVPQLLPDF (98 aa)). Residues 684-704 (LVIALACISFLFLGCLLFFVC) traverse the membrane as a helical segment. Residues 705-963 (TKLHQSPGCC…GNSTTDNSDQ (259 aa)) lie on the Cytoplasmic side of the membrane. PXXP repeat units lie at residues 812-815 (PRQP), 845-848 (PGGP), 886-889 (PGNP), and 904-907 (PGSP). The interval 812-907 (PRQPNPDWRY…PDKFIIPGSP (96 aa)) is 4 X 4 AA repeats of P-X-X-P. The interval 844-963 (GPGGPDQQWP…GNSTTDNSDQ (120 aa)) is disordered. A compositionally biased stretch (basic and acidic residues) spans 922 to 936 (DKSDFITFGKKEETK).

Its subcellular location is the cell membrane. In terms of biological role, potential calcium-dependent cell-adhesion protein. May be involved in the establishment and maintenance of specific neuronal connections in the brain. In Homo sapiens (Human), this protein is Protocadherin alpha-C1 (PCDHAC1).